Consider the following 415-residue polypeptide: Phosphoribosylamine--glycine ligase (415 aa).

The ATP-grasp domain occupies 108–311; sequence KKIMEKYNIP…LMQHIIDLDE (204 aa). 134–191 lines the ATP pocket; the sequence is IENCEFPVVVKKDGLAAGKGVIIADTIEAARSAIEIMYGDEEEGTVVFETFLEGEEFS. Positions 281 and 283 each coordinate Mg(2+).

The protein belongs to the GARS family. Mg(2+) is required as a cofactor. Requires Mn(2+) as cofactor.

It catalyses the reaction 5-phospho-beta-D-ribosylamine + glycine + ATP = N(1)-(5-phospho-beta-D-ribosyl)glycinamide + ADP + phosphate + H(+). It participates in purine metabolism; IMP biosynthesis via de novo pathway; N(1)-(5-phospho-D-ribosyl)glycinamide from 5-phospho-alpha-D-ribose 1-diphosphate: step 2/2. This Staphylococcus aureus (strain MRSA252) protein is Phosphoribosylamine--glycine ligase.